A 385-amino-acid chain; its full sequence is Aldehyde dehydrogenase family 3 member B2 (385 aa).

An NAD(+)-binding site is contributed by 107 to 112 (GSPRVG). Catalysis depends on residues E129 and C163. The residue at position 382 (C382) is a Cysteine methyl ester. Residue C382 is the site of S-geranylgeranyl cysteine attachment. A propeptide spans 383–385 (TLL) (removed in mature form).

This sequence belongs to the aldehyde dehydrogenase family. Geranylgeranylation is important for localization to lipid droplets and enzyme activity. In terms of tissue distribution, salivary gland. Expressed at protein level in placenta.

The protein localises to the lipid droplet. It catalyses the reaction an aldehyde + NAD(+) + H2O = a carboxylate + NADH + 2 H(+). The catalysed reaction is a long-chain fatty aldehyde + NAD(+) + H2O = a long-chain fatty acid + NADH + 2 H(+). The enzyme catalyses a medium-chain fatty aldehyde + NAD(+) + H2O = a medium-chain fatty acid + NADH + 2 H(+). It carries out the reaction hexadecanoate + NADH + 2 H(+) = hexadecanal + NAD(+) + H2O. It catalyses the reaction octanal + NAD(+) + H2O = octanoate + NADH + 2 H(+). It functions in the pathway alcohol metabolism; ethanol degradation; acetate from ethanol: step 2/2. Functionally, oxidizes medium and long chain fatty aldehydes in lipid droplets into non-toxic fatty acids. The sequence is that of Aldehyde dehydrogenase family 3 member B2 (ALDH3B2) from Homo sapiens (Human).